The chain runs to 37 residues: MKVRASVKKICEKCSVIKRRGRVMVICVNPKHKQRQG.

This sequence belongs to the bacterial ribosomal protein bL36 family.

The protein is Large ribosomal subunit protein bL36 of Nostoc punctiforme (strain ATCC 29133 / PCC 73102).